We begin with the raw amino-acid sequence, 322 residues long: Protease HtpX homolog (322 aa).

The next 2 membrane-spanning stretches (helical) occupy residues 19 to 39 and 61 to 81; these read ILLILFPCLVAVLTYLFCYLL and FINLIPYIIGGVLVWFIIAYF. Histidine 165 is a Zn(2+) binding site. Glutamate 166 is a catalytic residue. A Zn(2+)-binding site is contributed by histidine 169. Helical transmembrane passes span 175-195 and 216-236; these read VRLLIISIVFVGIFSMLAQIA and ILILVLAMIVAAIGYFFATLM. Glutamate 245 contacts Zn(2+).

This sequence belongs to the peptidase M48B family. The cofactor is Zn(2+).

The protein localises to the cell inner membrane. The chain is Protease HtpX homolog from Bacteroides fragilis (strain ATCC 25285 / DSM 2151 / CCUG 4856 / JCM 11019 / LMG 10263 / NCTC 9343 / Onslow / VPI 2553 / EN-2).